Consider the following 522-residue polypeptide: Glutamate--cysteine ligase, chloroplastic (522 aa).

The transit peptide at methionine 1 to serine 45 directs the protein to the chloroplast. Cysteine 186 and cysteine 406 are disulfide-bonded.

The protein belongs to the carboxylate-amine ligase family. Glutamate--cysteine ligase type 2 subfamily. In terms of assembly, homodimer or monomer when oxidized or reduced, respectively. In terms of processing, the Cys-186-Cys-406 disulfide bridge is known to modulate the enzyme activity according to the redox status. The oxidized form constitutes the active enzyme.

The protein localises to the plastid. Its subcellular location is the chloroplast. The enzyme catalyses L-cysteine + L-glutamate + ATP = gamma-L-glutamyl-L-cysteine + ADP + phosphate + H(+). The protein operates within sulfur metabolism; glutathione biosynthesis; glutathione from L-cysteine and L-glutamate: step 1/2. The protein is Glutamate--cysteine ligase, chloroplastic (GSH1) of Nicotiana tabacum (Common tobacco).